The sequence spans 281 residues: Energy-coupling factor transporter ATP-binding protein EcfA1 (281 aa).

An ABC transporter domain is found at 6–242; sequence IDVKHLDYRY…GEALIKMGLD (237 aa). 42-49 provides a ligand contact to ATP; the sequence is GHNGSGKS.

This sequence belongs to the ABC transporter superfamily. Energy-coupling factor EcfA family. In terms of assembly, forms a stable energy-coupling factor (ECF) transporter complex composed of 2 membrane-embedded substrate-binding proteins (S component), 2 ATP-binding proteins (A component) and 2 transmembrane proteins (T component).

Its subcellular location is the cell membrane. Functionally, ATP-binding (A) component of a common energy-coupling factor (ECF) ABC-transporter complex. Unlike classic ABC transporters this ECF transporter provides the energy necessary to transport a number of different substrates. In Lactiplantibacillus plantarum (strain ATCC BAA-793 / NCIMB 8826 / WCFS1) (Lactobacillus plantarum), this protein is Energy-coupling factor transporter ATP-binding protein EcfA1.